A 373-amino-acid chain; its full sequence is MALNVAPVRDTKWLTLEVCRQYQRGTCSRSDEECKFAHPPKSCQVENGRVIACFDSLKGRCSRENCKYLHPPTHLKTQLEINGRNNLIQQKTAAAMLAQQMQFMFPGTPLHPVPTFPVGPTIGTNAAISFAPYLAPVTPGVGLVPTEVLPTTPVIVPGSPPVTVPGSTATQKLLRTDKLEVCREFQRGNCARGETDCRFAHPADSTMIDTNDNTVTVCMDYIKGRCMREKCKYFHPPAHLQAKIKAAQHQANQAAVAAQAAAAAATVMTQSTAKALKRPLEATVDLAFPPGALHPLPKRQALEKSNGASTVFNPSVLHYQQALTSAQLQQHTAFIPTVPMMHSATSATVSAATTPATSVPFAATATANQIILK.

C3H1-type zinc fingers lie at residues 13–41 (WLTLEVCRQYQRGTCSRSDEECKFAHPPK), 47–73 (NGRVIACFDSLKGRCSRENCKYLHPPT), 176–204 (TDKLEVCREFQRGNCARGETDCRFAHPAD), and 212–238 (DNTVTVCMDYIKGRCMREKCKYFHPPA).

The protein belongs to the muscleblind family. In terms of assembly, interacts with ITGA3.

The protein localises to the nucleus. The protein resides in the cytoplasm. In terms of biological role, mediates pre-mRNA alternative splicing regulation. Acts either as activator or repressor of splicing on specific pre-mRNA targets. Inhibits cardiac troponin-T (TNNT2) pre-mRNA exon inclusion but induces insulin receptor (IR) pre-mRNA exon inclusion in muscle. Antagonizes the alternative splicing activity pattern of CELF proteins. RNA-binding protein that binds to 5'ACACCC-3' core sequence, termed zipcode, within the 3'UTR of ITGA3. Binds to CUG triplet repeat expansion in myotonic dystrophy muscle cells by sequestering the target RNAs. Together with RNA binding proteins RBPMS and RBFOX2, activates vascular smooth muscle cells alternative splicing events. Regulates NCOR2 alternative splicing. Seems to regulate expression and localization of ITGA3 by transporting it from the nucleus to cytoplasm at adhesion plaques. May play a role in myotonic dystrophy pathophysiology (DM). This chain is Muscleblind-like protein 2 (Mbnl2), found in Mus musculus (Mouse).